The primary structure comprises 414 residues: Lysocardiolipin acyltransferase 1 (414 aa).

2 helical membrane-spanning segments follow: residues 47 to 67 and 86 to 106; these read FILTLFWGSFFGSIFMLSPFL and ATWLTLPVALLETMFGVKVII. The short motif at 123–128 is the HXXXXD motif element; that stretch reads HRTRMD. The residue at position 221 (Lys221) is an N6-acetyllysine. Transmembrane regions (helical) follow at residues 340 to 360 and 362 to 382; these read LRVLVVKLLSILYWTLFSPAM and LLIYLYSLVKWYFIITIVIFV.

This sequence belongs to the 1-acyl-sn-glycerol-3-phosphate acyltransferase family. As to expression, expressed at higher level in heart, kidney and pancreas than in brain, spleen, liver, lung, small intestine and placenta.

It localises to the endoplasmic reticulum membrane. It carries out the reaction a 1-acyl-sn-glycero-3-phosphate + an acyl-CoA = a 1,2-diacyl-sn-glycero-3-phosphate + CoA. The catalysed reaction is a 1-acyl-sn-glycero-3-phospho-(1D-myo-inositol) + an acyl-CoA = a 1,2-diacyl-sn-glycero-3-phospho-(1D-myo-inositol) + CoA. The enzyme catalyses 1-acyl-sn-glycero-3-phospho-(1'-sn-glycerol) + an acyl-CoA = a 1,2-diacyl-sn-glycero-3-phospho-(1'-sn-glycerol) + CoA. It catalyses the reaction 1-hexadecanoyl-sn-glycero-3-phosphate + (9Z)-octadecenoyl-CoA = 1-hexadecanoyl-2-(9Z-octadecenoyl)-sn-glycero-3-phosphate + CoA. It carries out the reaction 1-(9Z-octadecenoyl)-sn-glycero-3-phosphate + (9Z)-octadecenoyl-CoA = 1,2-di-(9Z-octadecenoyl)-sn-glycero-3-phosphate + CoA. The catalysed reaction is 1-(9Z,12Z)-octadecadienoyl-sn-glycero-3-phosphate + (9Z)-octadecenoyl-CoA = 1-(9Z,12Z)-octadecadienoyl-2-(9Z)-octadecenoyl-sn-glycero-3-phosphate + CoA. The enzyme catalyses 1-(9Z,12Z,15Z)-octadecatrienoyl-sn-glycero-3-phosphate + (9Z)-octadecenoyl-CoA = 1-(9Z,12Z,15Z)-octadecatrienoyl-2-(9Z)-octadecenoyl-sn-glycero-3-phosphate + CoA. It catalyses the reaction 1-(9Z-octadecenoyl)-sn-glycero-3-phosphate + hexadecanoyl-CoA = 1-(9Z)-octadecenoyl-2-hexadecanoyl-sn-glycero-3-phosphate + CoA. It carries out the reaction 1-(9Z-octadecenoyl)-sn-glycero-3-phosphate + octadecanoyl-CoA = 1-(9Z-octadecenoyl)-2-octadecanoyl-sn-glycero-3-phosphate + CoA. The catalysed reaction is 1-acyl-sn-glycero-3-phospho-(1'-sn-glycerol) + (9Z)-octadecenoyl-CoA = 1-acyl-2-(9Z-octadecenoyl)-sn-glycero-3-phospho-(1'-sn-glycerol) + CoA. The enzyme catalyses a 1-acyl-sn-glycero-3-phospho-(1D-myo-inositol) + (9Z)-octadecenoyl-CoA = a 1-acyl-2-(9Z-octadecenoyl)-sn-glycero-3-phospho-(1D-myo-inositol) + CoA. It catalyses the reaction 1-hexadecanoyl-sn-glycero-3-phospho-(1D-myo-inositol) + hexadecanoyl-CoA = 1,2-dihexadecanoyl-sn-glycero-3-phospho-(1D-myo-inositol) + CoA. It carries out the reaction 1-hexadecanoyl-sn-glycero-3-phospho-(1D-myo-inositol) + octadecanoyl-CoA = 1-hexadecanoyl-2-octadecanoyl-sn-glycero-3-phospho-(1D-myo-inositol) + CoA. The catalysed reaction is 1-hexadecanoyl-sn-glycero-3-phospho-(1D-myo-inositol) + (9Z)-octadecenoyl-CoA = 1-hexadecanoyl-2-(9Z-octadecenoyl)-sn-glycero-3-phospho-(1D-myo-inositol) + CoA. The enzyme catalyses 1-hexadecanoyl-sn-glycero-3-phospho-(1D-myo-inositol) + (9Z,12Z)-octadecadienoyl-CoA = 1-hexadecanoyl-2-(9Z,12Z-octadecadienoyl)-sn-glycero-3-phospho-(1D-myo-inositol) + CoA. It catalyses the reaction 1-hexadecanoyl-sn-glycero-3-phospho-(1D-myo-inositol) + (5Z,8Z,11Z,14Z)-eicosatetraenoyl-CoA = 1-hexadecanoyl-2-(5Z,8Z,11Z,14Z-eicosatetraenoyl)-sn-glycero-3-phospho-D-myo-inositol + CoA. It carries out the reaction 1-hexadecanoyl-sn-glycero-3-phospho-(1'-sn-glycerol) + hexadecanoyl-CoA = 1,2-dihexadecanoyl-sn-glycero-3-phospho-(1'-sn-glycerol) + CoA. The catalysed reaction is 1-hexadecanoyl-sn-glycero-3-phospho-(1'-sn-glycerol) + octadecanoyl-CoA = 1-hexadecanoyl-2-octadecanoyl-sn-glycero-3-phospho-(1'-sn-glycerol) + CoA. The enzyme catalyses 1-hexadecanoyl-sn-glycero-3-phospho-(1'-sn-glycerol) + (9Z)-octadecenoyl-CoA = 1-hexadecanoyl-2-(9Z-octadecenoyl)-sn-glycero-3-phospho-(1'-sn-glycerol) + CoA. It catalyses the reaction 1-hexadecanoyl-sn-glycero-3-phospho-(1'-sn-glycerol) + (9Z,12Z)-octadecadienoyl-CoA = 1-hexadecanoyl-2-(9Z,12Z-octadecadienoyl)-sn-glycero-3-phospho-(1'-sn-glycerol) + CoA. It carries out the reaction 1-tetradecanoyl-sn-glycero-3-phospho-(1'-sn-glycerol) + (9Z)-octadecenoyl-CoA = 1-tetradecanoyl-2-(9Z-octadecenoyl)-sn-glycero-3-phospho-(1'-sn-glycerol) + CoA. The catalysed reaction is 1-octadecanoyl-sn-glycero-3-phospho-(1'-sn-glycerol) + (9Z)-octadecenoyl-CoA = 1-octadecanoyl-2-(9Z-octadecenoyl)-sn-glycero-3-phospho-(1'-sn-glycerol) + CoA. The enzyme catalyses 1-(9Z-octadecenoyl)-sn-glycero-3-phospho-(1'-sn-glycerol) + (9Z)-octadecenoyl-CoA = 1,2-di-(9Z-octadecenoyl)-sn-glycero-3-phospho-(1'-sn-glycerol) + CoA. It catalyses the reaction 1-hexadecanoyl-sn-glycero-3-phospho-(1D-myo-inositol) + dodecanoyl-CoA = 1-hexadecanoyl-2-dodecanoyl-sn-glycero-3-phospho-(1D-myo-inositol) + CoA. It carries out the reaction 1',3'-bis-[1-acyl-sn-glycero-3-phospho]-glycerol + (9Z)-octadecenoyl-CoA = 1'-[1-acyl-2-(9Z)-octadecenoyl-sn-glycero-3-phospho],3'-[1-acyl,2-hydroxy-sn-glycero-3-phospho]-glycerol + CoA. The catalysed reaction is 1'-[1,2-diacyl-sn-glycero-3-phospho],3'-[1-acyl-sn-glycero-3-phospho]-glycerol + (9Z)-octadecenoyl-CoA = 1'-[1,2-diacyl-sn-glycero-3-phospho],3'-[1-acyl,2-(9Z)-octadecenoyl-sn-glycero-3-phospho]-glycerol + CoA. The enzyme catalyses 1'-[1,2-diacyl-sn-glycero-3-phospho],3'-[1-acyl-sn-glycero-3-phospho]-glycerol + (9Z,12Z)-octadecadienoyl-CoA = 1'-[1,2-diacyl-sn-glycero-3-phospho],3'-[1-acyl,2-(9Z,12Z)-octadecadienoyl-sn-glycero-3-phospho]-glycerol + CoA. It catalyses the reaction 1'-[1,2-diacyl-sn-glycero-3-phospho],3'-[1-acyl-sn-glycero-3-phospho]-glycerol + dodecanoyl-CoA = 1'-[1,2-diacyl-sn-glycero-3-phospho],3'-[1-acyl,2-dodecanoyl-sn-glycero-3-phospho]-glycerol + CoA. It carries out the reaction 1',3'-bis-[1-acyl-sn-glycero-3-phospho]-glycerol + dodecanoyl-CoA = 1'-[1-acyl-2-dodecanoyl-sn-glycero-3-phospho],3'-[1-acyl,2-hydroxy-sn-glycero-3-phospho]-glycerol + CoA. The catalysed reaction is a 1-acyl-sn-glycero-3-phosphate + (9Z)-octadecenoyl-CoA = a 1-acyl-2-(9Z-octadecenoyl)-sn-glycero-3-phosphate + CoA. The enzyme catalyses 1',3'-bis-[1-acyl-sn-glycero-3-phospho]-glycerol + (9Z,12Z)-octadecadienoyl-CoA = 1'-[1-acyl-2-(9Z,12Z)-octadecadienoyl-sn-glycero-3-phospho],3'-[1-acyl,2-hydroxy-sn-glycero-3-phospho]-glycerol + CoA. It catalyses the reaction 1',3'-bis-[1-acyl-sn-glycero-3-phospho]-glycerol + hexadecanoyl-CoA = 1'-[1-acyl-2-hexadecanoyl-sn-glycero-3-phospho],3'-[1-acyl,2-hydroxy-sn-glycero-3-phospho]-glycerol + CoA. It carries out the reaction 1',3'-bis-[1-acyl-sn-glycero-3-phospho]-glycerol + octadecanoyl-CoA = 1'-[1-acyl-2-octadecanoyl-sn-glycero-3-phospho],3'-[1-acyl,2-hydroxy-sn-glycero-3-phospho]-glycerol + CoA. The catalysed reaction is 1'-[1,2-diacyl-sn-glycero-3-phospho],3'-[1-acyl-sn-glycero-3-phospho]-glycerol + octanoyl-CoA = 1'-[1,2-diacyl-sn-glycero-3-phospho],3'-[1-acyl,2-octanoyl-sn-glycero-3-phospho]-glycerol + CoA. The enzyme catalyses 1',3'-bis-[1-acyl-sn-glycero-3-phospho]-glycerol + octanoyl-CoA = 1'-[1-acyl-2-octanoyl-sn-glycero-3-phospho],3'-[1-acyl,2-hydroxy-sn-glycero-3-phospho]-glycerol + CoA. It catalyses the reaction 1'-[1,2-diacyl-sn-glycero-3-phospho],3'-[1-acyl-sn-glycero-3-phospho]-glycerol + hexadecanoyl-CoA = 1'-[1,2-diacyl-sn-glycero-3-phospho],3'-[1-acyl,2-hexadecanoyl-sn-glycero-3-phospho]-glycerol + CoA. It carries out the reaction 1'-[1,2-diacyl-sn-glycero-3-phospho],3'-[1-acyl-sn-glycero-3-phospho]-glycerol + (5Z,8Z,11Z,14Z)-eicosatetraenoyl-CoA = 1'-[1,2-diacyl-sn-glycero-3-phospho],3'-[1-acyl,2-(5Z,8Z,11Z,14Z)-eicosatetraenoyl-sn-glycero-3-phospho]-glycerol + CoA. The catalysed reaction is 1',3'-bis-[1-acyl-sn-glycero-3-phospho]-glycerol + (5Z,8Z,11Z,14Z)-eicosatetraenoyl-CoA = 1'-[1-acyl-2-(5Z,8Z,11Z,14Z)-eicosatetraenoyl-sn-glycero-3-phospho],3'-[1-acyl,2-hydroxy-sn-glycero-3-phospho]-glycerol + CoA. The enzyme catalyses a 1-acyl-sn-glycero-3-phospho-(1D-myo-inositol) + octadecanoyl-CoA = a 1-acyl-2-octadecanoyl-sn-glycero-3-phospho-(1D-myo-inositol) + CoA. It catalyses the reaction a 2-acyl-sn-glycero-3-phospho-D-myo-inositol + octadecanoyl-CoA = 1-octadecanoyl-2-acyl-sn-glycero-3-phospho-1D-myo-inositol + CoA. The protein operates within phospholipid metabolism; CDP-diacylglycerol biosynthesis; CDP-diacylglycerol from sn-glycerol 3-phosphate: step 2/3. Functionally, exhibits acyl-CoA:lysocardiolipin acyltransferase (ALCAT) activity; catalyzes the reacylation of lyso-cardiolipin to cardiolipin (CL), a key step in CL remodeling. Recognizes both monolysocardiolipin and dilysocardiolipin as substrates with a preference for linoleoyl-CoA and oleoyl-CoA as acyl donors. Also exhibits 1-acyl-sn-glycerol-3-phosphate acyltransferase activity (AGPAT) activity; converts 1-acyl-sn-glycerol-3- phosphate (lysophosphatidic acid or LPA) into 1,2-diacyl-sn-glycerol-3- phosphate (phosphatidic acid or PA) by incorporating an acyl moiety at the sn-2 position of the glycerol backbone. Possesses both lysophosphatidylinositol acyltransferase (LPIAT) and lysophosphatidylglycerol acyltransferase (LPGAT) activities. Required for establishment of the hematopoietic and endothelial lineages. In Homo sapiens (Human), this protein is Lysocardiolipin acyltransferase 1 (LCLAT1).